A 312-amino-acid polypeptide reads, in one-letter code: Olfactory receptor OR51C1 (312 aa).

The Extracellular portion of the chain corresponds to 1–26; it reads MGSNITSTSIIFLLTGVPGLEAFHTW. The chain crosses the membrane as a helical span at residues 27–47; that stretch reads ISIPFCFLSVTALLGNSLILF. The Cytoplasmic segment spans residues 48–66; the sequence is ATITQPSLHEPMYYFLSML. A helical transmembrane segment spans residues 67–87; the sequence is SATDLGLSISTLVTMLSIFWF. Over 88–99 the chain is Extracellular; it reads NVREISFNACLS. A disulfide bond links C97 and C179. A helical transmembrane segment spans residues 100-120; the sequence is HMFFIKFFTVMESSVLLAMAF. The Cytoplasmic portion of the chain corresponds to 121-143; sequence DRFVAVSNPLRYAMILTDSRIAQ. The helical transmembrane segment at 144-164 threads the bilayer; it reads IGVASVIRGLLMLTPMVALLI. The Extracellular portion of the chain corresponds to 165 to 201; that stretch reads RLSYCHSQVLHHSYCYHPDVMKLSCTDTRINSAVGLT. The chain crosses the membrane as a helical span at residues 202–222; the sequence is AMFSTVGVDLLLILLSYVLII. The Cytoplasmic portion of the chain corresponds to 223-240; sequence RTVLSVASPEERKETFST. A helical membrane pass occupies residues 241-261; it reads CVSHIVAFAIYYIPLISLSIV. Residues 262–273 lie on the Extracellular side of the membrane; sequence HRFGKQAPAYVH. The helical transmembrane segment at 274 to 294 threads the bilayer; the sequence is TMIANTYLLISPLMNPVIYSV. Over 295–312 the chain is Cytoplasmic; sequence KTKQIRRAVIKILHSKET.

Belongs to the G-protein coupled receptor 1 family.

It localises to the membrane. Odorant receptor. This is Olfactory receptor OR51C1 from Homo sapiens (Human).